Reading from the N-terminus, the 380-residue chain is Chorismate synthase (380 aa).

Arg48 is an NADP(+) binding site. Residues 126–128 (HFS), Gly300, 315–319 (KPISS), and Arg342 each bind FMN.

It belongs to the chorismate synthase family. Homotetramer. It depends on FMNH2 as a cofactor.

The enzyme catalyses 5-O-(1-carboxyvinyl)-3-phosphoshikimate = chorismate + phosphate. The protein operates within metabolic intermediate biosynthesis; chorismate biosynthesis; chorismate from D-erythrose 4-phosphate and phosphoenolpyruvate: step 7/7. Functionally, catalyzes the anti-1,4-elimination of the C-3 phosphate and the C-6 proR hydrogen from 5-enolpyruvylshikimate-3-phosphate (EPSP) to yield chorismate, which is the branch point compound that serves as the starting substrate for the three terminal pathways of aromatic amino acid biosynthesis. This reaction introduces a second double bond into the aromatic ring system. This Lancefieldella parvula (strain ATCC 33793 / DSM 20469 / CCUG 32760 / JCM 10300 / KCTC 3663 / VPI 0546 / 1246) (Atopobium parvulum) protein is Chorismate synthase.